A 469-amino-acid chain; its full sequence is Light-independent protochlorophyllide reductase subunit N (469 aa).

Positions 24, 49, and 109 each coordinate [4Fe-4S] cluster.

It belongs to the BchN/ChlN family. As to quaternary structure, protochlorophyllide reductase is composed of three subunits; ChlL, ChlN and ChlB. Forms a heterotetramer of two ChlB and two ChlN subunits. [4Fe-4S] cluster serves as cofactor.

It catalyses the reaction chlorophyllide a + oxidized 2[4Fe-4S]-[ferredoxin] + 2 ADP + 2 phosphate = protochlorophyllide a + reduced 2[4Fe-4S]-[ferredoxin] + 2 ATP + 2 H2O. The protein operates within porphyrin-containing compound metabolism; chlorophyll biosynthesis (light-independent). Component of the dark-operative protochlorophyllide reductase (DPOR) that uses Mg-ATP and reduced ferredoxin to reduce ring D of protochlorophyllide (Pchlide) to form chlorophyllide a (Chlide). This reaction is light-independent. The NB-protein (ChlN-ChlB) is the catalytic component of the complex. This is Light-independent protochlorophyllide reductase subunit N from Synechocystis sp. (strain ATCC 27184 / PCC 6803 / Kazusa).